A 335-amino-acid chain; its full sequence is MSSEVTVTEHLLLQQQRAPQATGHFTSLFHDLILSAKIISRSVNKAGLLDVLGGTGDINIQGEKVQKLDEFADKVLLYRMERSGVLCAMASEEHAELIKVSAAFPRGDYILIFDPLDGSSNIDVNINVGTIFSILRRKPGKTGDVELDEVLQPGSEQIAAGYFLYGTSTMLVYTAGQGVHGFTLDPSVGEFLLSHTDIKIPDEGFIYSVNEGYWDYWDTPTREAVMYFKQPSSKEKVRSARYVGSLVADFHRTLLYGGVFMYPSDNRKGKMHGKLRYLCEASPLAFVAENAGGAATDGLYRTLDYVPLSLHNRVPLVIGSKKDVEAVANIYAKYK.

Residues E92, D114, L116, and D117 each coordinate Mg(2+). Residues 117–120, N210, Y242, and K274 contribute to the substrate site; that span reads DGSS. E280 is a Mg(2+) binding site.

It belongs to the FBPase class 1 family. In terms of assembly, homotetramer. Mg(2+) is required as a cofactor.

The protein resides in the cytoplasm. It catalyses the reaction beta-D-fructose 1,6-bisphosphate + H2O = beta-D-fructose 6-phosphate + phosphate. Its pathway is carbohydrate biosynthesis; gluconeogenesis. The chain is Fructose-1,6-bisphosphatase class 1 from Lawsonia intracellularis (strain PHE/MN1-00).